The chain runs to 346 residues: Biotin synthase (346 aa).

A compositionally biased stretch (polar residues) spans 1–12 (MPDTATVSSESE). The disordered stretch occupies residues 1 to 21 (MPDTATVSSESEFSGHAHVAA). The region spanning 64–292 (NKVQLCSLLS…QSMVRLSAGR (229 aa)) is the Radical SAM core domain. Residues Cys-79, Cys-83, and Cys-86 each contribute to the [4Fe-4S] cluster site. Residues Cys-123, Cys-155, Cys-215, and Arg-287 each contribute to the [2Fe-2S] cluster site.

Belongs to the radical SAM superfamily. Biotin synthase family. In terms of assembly, homodimer. [4Fe-4S] cluster serves as cofactor. [2Fe-2S] cluster is required as a cofactor.

The enzyme catalyses (4R,5S)-dethiobiotin + (sulfur carrier)-SH + 2 reduced [2Fe-2S]-[ferredoxin] + 2 S-adenosyl-L-methionine = (sulfur carrier)-H + biotin + 2 5'-deoxyadenosine + 2 L-methionine + 2 oxidized [2Fe-2S]-[ferredoxin]. It functions in the pathway cofactor biosynthesis; biotin biosynthesis; biotin from 7,8-diaminononanoate: step 2/2. In terms of biological role, catalyzes the conversion of dethiobiotin (DTB) to biotin by the insertion of a sulfur atom into dethiobiotin via a radical-based mechanism. In Myxococcus xanthus (strain DK1622), this protein is Biotin synthase.